The sequence spans 435 residues: Proline--tRNA ligase (435 aa).

This sequence belongs to the class-II aminoacyl-tRNA synthetase family. ProS type 2 subfamily. Homodimer.

The protein resides in the cytoplasm. The enzyme catalyses tRNA(Pro) + L-proline + ATP = L-prolyl-tRNA(Pro) + AMP + diphosphate. Functionally, catalyzes the attachment of proline to tRNA(Pro) in a two-step reaction: proline is first activated by ATP to form Pro-AMP and then transferred to the acceptor end of tRNA(Pro). This Rhodospirillum rubrum (strain ATCC 11170 / ATH 1.1.1 / DSM 467 / LMG 4362 / NCIMB 8255 / S1) protein is Proline--tRNA ligase.